We begin with the raw amino-acid sequence, 282 residues long: Elongation factor Ts (282 aa).

Residues 80 to 83 are involved in Mg(2+) ion dislocation from EF-Tu; that stretch reads TDFV.

This sequence belongs to the EF-Ts family.

The protein localises to the cytoplasm. In terms of biological role, associates with the EF-Tu.GDP complex and induces the exchange of GDP to GTP. It remains bound to the aminoacyl-tRNA.EF-Tu.GTP complex up to the GTP hydrolysis stage on the ribosome. The sequence is that of Elongation factor Ts from Chlamydia caviae (strain ATCC VR-813 / DSM 19441 / 03DC25 / GPIC) (Chlamydophila caviae).